The primary structure comprises 396 residues: S-adenosylmethionine synthase (396 aa).

His16 is a binding site for ATP. Asp18 is a binding site for Mg(2+). Glu44 provides a ligand contact to K(+). L-methionine contacts are provided by Glu57 and Gln100. A flexible loop region spans residues 100–110; the sequence is QSPDINQGVDR. Residues 165-167, Asp240, 246-247, Ala263, and Lys267 each bind ATP; these read DAK and RK. Asp240 contributes to the L-methionine binding site. An L-methionine-binding site is contributed by Lys271.

This sequence belongs to the AdoMet synthase family. As to quaternary structure, homotetramer; dimer of dimers. It depends on Mg(2+) as a cofactor. Requires K(+) as cofactor.

It is found in the cytoplasm. It carries out the reaction L-methionine + ATP + H2O = S-adenosyl-L-methionine + phosphate + diphosphate. It functions in the pathway amino-acid biosynthesis; S-adenosyl-L-methionine biosynthesis; S-adenosyl-L-methionine from L-methionine: step 1/1. Functionally, catalyzes the formation of S-adenosylmethionine (AdoMet) from methionine and ATP. The overall synthetic reaction is composed of two sequential steps, AdoMet formation and the subsequent tripolyphosphate hydrolysis which occurs prior to release of AdoMet from the enzyme. This chain is S-adenosylmethionine synthase, found in Pseudomonas fluorescens (strain ATCC BAA-477 / NRRL B-23932 / Pf-5).